The primary structure comprises 560 residues: MADFQDELLALAGIDDSDVASNRKRAHDDLDDVLSSSSDEDNNENVGQDYAEESGGEGNEKSEDEFEEKFKNPYRLEGKFKDEADRAKIMAMTEIERESILFEREEEISKLMERRELAIRLHQQNAQYMAQSTRRSTRDKPLTSAAAGKRDKLTELKKRRQERSARSVSERTRKRSPVSDYEEQNESEKSEEEEGYSPSYAEEKVEQVSKDNASANLYDLNAIRLGRKHVAEYMYHPIFESTVTGCFVRVKIGERDGQGVYRLCQVKGILESRKPYRVDGVLTKVSLECFHGRSKRVFDVNVLSNEPFSDHDFQRWHHQMMEDKLSMPSKNFVQRKLNDLRDMSKYVLSEKEVSDIINRKKELSRVPSNIAAEKTRLRQRRQAAYVAGNAELVKEIDDQLNTLEELSMGSNQNSNSAMDQLAKVNERNRRRNHTEIRLAEQRMNEERRRLSAAATATPMSAPTSVLTGTSPQPSPSLSTSIMSTPKLNPSESVVVASEKASSPDLSPKLLPSESQIFDEGIAVTQTPNTLEDKDFKLHEKAVHGIDDIIATVDFGIDINI.

Disordered stretches follow at residues 15-74 (DDSD…KNPY) and 128-207 (YMAQ…KVEQ). The span at 148 to 171 (GKRDKLTELKKRRQERSARSVSER) shows a compositional bias: basic and acidic residues. A compositionally biased stretch (acidic residues) spans 180-195 (DYEEQNESEKSEEEEG). S197 is subject to Phosphoserine. The Plus3 domain maps to 214–345 (SANLYDLNAI…KLNDLRDMSK (132 aa)). A coiled-coil region spans residues 387 to 456 (AGNAELVKEI…RRRLSAAATA (70 aa)). Basic and acidic residues predominate over residues 440–449 (EQRMNEERRR). The tract at residues 440 to 486 (EQRMNEERRRLSAAATATPMSAPTSVLTGTSPQPSPSLSTSIMSTPK) is disordered. A compositionally biased stretch (low complexity) spans 451–480 (SAAATATPMSAPTSVLTGTSPQPSPSLSTS). S502 and S506 each carry phosphoserine.

Component of the PAF1 complex.

The protein localises to the nucleus. It is found in the nucleoplasm. In terms of biological role, the PAF1 complex is a multifunctional complex. Involved in transcription initiation via genetic interactions with TATA-binding proteins. Involved in elongation. Also has a role in transcription-coupled histone modification. Important for TATA site selection by TBP. Directly or indirectly regulates the DNA-binding properties of the TATA box-binding protein, and the relative activities of different TATA elements. The chain is RNA polymerase-associated protein C651.09c from Schizosaccharomyces pombe (strain 972 / ATCC 24843) (Fission yeast).